The chain runs to 132 residues: MSTHDPISDLITRIRNAQMRSKSKVSTPGSKMRANVLDVLKAEGYIRGYATVEHPSGRSELEIELKYFDGEPVIREIERVSRPGRRVYASVKNLPRVNNGLGISVLSTPKGIMADHDARDANVGGEVLFTVF.

Part of the 30S ribosomal subunit. Contacts proteins S5 and S12. In terms of processing, a modified and unmodified form exist; the nature of the modification(s) is unknown.

One of the primary rRNA binding proteins, it binds directly to 16S rRNA central domain where it helps coordinate assembly of the platform of the 30S subunit. The chain is Small ribosomal subunit protein uS8 from Rhodopseudomonas palustris (strain ATCC BAA-98 / CGA009).